The chain runs to 1002 residues: DNA-directed RNA polymerase 1B, mitochondrial (1002 aa).

The transit peptide at 1–21 (MWRYISKHAYSRKFRNSHDSA) directs the protein to the mitochondrion. Active-site residues include aspartate 703, lysine 778, and aspartate 935.

This sequence belongs to the phage and mitochondrial RNA polymerase family.

Its subcellular location is the mitochondrion. The enzyme catalyses RNA(n) + a ribonucleoside 5'-triphosphate = RNA(n+1) + diphosphate. Functionally, DNA-dependent RNA polymerase catalyzes the transcription of DNA into RNA using the four ribonucleoside triphosphates as substrates. This is DNA-directed RNA polymerase 1B, mitochondrial (RPOT1-TOM) from Nicotiana tabacum (Common tobacco).